A 2554-amino-acid chain; its full sequence is DnaJ homolog subfamily C GRV2 (2554 aa).

Disordered regions lie at residues 746–766 (DVVD…KRLL) and 810–833 (QRRA…GVDS). The span at 815 to 825 (DSSSEASNPQA) shows a compositional bias: polar residues. 2 coiled-coil regions span residues 925 to 951 (TRQE…EDIS) and 1518 to 1546 (RTAS…LKRQ). One can recognise a J domain in the interval 1524 to 1606 (LNEEISNISK…AQCILYRRYG (83 aa)). Disordered stretches follow at residues 1960–1994 (IEDR…SSEG) and 2339–2366 (SGEV…GQTP). Positions 1966 to 1977 (SNDTPELQSSVA) are enriched in polar residues. Basic and acidic residues predominate over residues 1982–1994 (IEEHSDHQPSSEG). Positions 2352–2366 (VNESTDPSSLPGQTP) are enriched in polar residues.

In terms of tissue distribution, constitutively expressed in roots, hypocotyls, leaves (e.g. vascular tissues), stems, flowers (e.g. petals and stigmas), siliques and pollen.

It is found in the endosome membrane. Functionally, required for endosome formation, vacuolar protein sorting and determination of the embryo growth axis. Necessary for the transport of proteins into protein storage vacuoles (PSVs). Participates in vesicle trafficking from the endosome to the central vacuole. Involved in the regulation of shoot phototropism and gravitropism, probably through the positioning of specialized amyloplasts (statoliths) in endodermal cells. The chain is DnaJ homolog subfamily C GRV2 (GRV2) from Arabidopsis thaliana (Mouse-ear cress).